The following is a 126-amino-acid chain: Fatty acid-binding protein 1, liver (126 aa).

Belongs to the calycin superfamily. Fatty-acid binding protein (FABP) family.

Its subcellular location is the cytoplasm. In terms of biological role, binds free fatty acids and their coenzyme A derivatives, bilirubin, and some other small molecules in the cytoplasm. May be involved in intracellular lipid transport. The specificity of axolotl L-FABP differs from that of LB-FABP. The sequence is that of Fatty acid-binding protein 1, liver from Ambystoma mexicanum (Axolotl).